We begin with the raw amino-acid sequence, 380 residues long: MKTKLNIKLYDEKLLWCTLCLLLIGVTMVTSSSIPIAYRIYHDMLFFTKKQILYLVILFFIFKIFLDVPISFWQKNNKIILLISISTLLLVLIIGNSIHGSLRWITISYVSMQPSELSKLAMFCYLSNYLSQKNSEIVNNFGGFLKPIIIISFPLILLLVEPDLGTTIVILLTTLSLLFISGTKIQKFIPTILIIVVTTTVLIIKSPYRFERIMSFWNPWNDPFGKGYQLTQSLMALGRGNIFGMGLGHSIQKLEYLPEAHTDFIFAIIGEELGYIGACTILFMIFFISFRAFKIGKIALKNKIFFSGYFAFSIGLWLIFQTLINVGTTIGLLPTKGLTLPLISYGGSSLIIVSIAIIILIRIDFELRMKNIQAFYKTDI.

10 helical membrane passes run 14–34 (LLWC…SSSI), 52–72 (ILYL…PISF), 79–99 (IILL…NSIH), 112–131 (MQPS…NYLS), 141–161 (FGGF…LLVE), 162–182 (PDLG…FISG), 188–208 (FIPT…KSPY), 268–288 (IIGE…IFFI), 304–324 (IFFS…QTLI), and 341–361 (PLIS…IILI).

It belongs to the SEDS family. FtsW subfamily.

It is found in the cell membrane. The enzyme catalyses [GlcNAc-(1-&gt;4)-Mur2Ac(oyl-L-Ala-gamma-D-Glu-L-Lys-D-Ala-D-Ala)](n)-di-trans,octa-cis-undecaprenyl diphosphate + beta-D-GlcNAc-(1-&gt;4)-Mur2Ac(oyl-L-Ala-gamma-D-Glu-L-Lys-D-Ala-D-Ala)-di-trans,octa-cis-undecaprenyl diphosphate = [GlcNAc-(1-&gt;4)-Mur2Ac(oyl-L-Ala-gamma-D-Glu-L-Lys-D-Ala-D-Ala)](n+1)-di-trans,octa-cis-undecaprenyl diphosphate + di-trans,octa-cis-undecaprenyl diphosphate + H(+). It participates in cell wall biogenesis; peptidoglycan biosynthesis. Peptidoglycan polymerase that is essential for cell division. This is Probable peptidoglycan glycosyltransferase FtsW from Buchnera aphidicola subsp. Baizongia pistaciae (strain Bp).